Consider the following 105-residue polypeptide: 5-hydroxymethyl-dUMP N-hydrolase (105 aa).

5-hydroxymethyl-dUMP contacts are provided by glycine 6, isoleucine 8, serine 42, glycine 44, glutamate 48, and serine 72.

This sequence belongs to the 2'-deoxynucleoside 5'-phosphate N-hydrolase 1 family. As to quaternary structure, monomer and homodimer.

Its subcellular location is the cytoplasm. It localises to the nucleus. The catalysed reaction is 5-hydroxymethyl-dUMP + H2O = 5-hydroxymethyluracil + 2-deoxy-D-ribose 5-phosphate. Functionally, part of a nucleotide salvage pathway that eliminates epigenetically modified 5-hydroxymethyl-dCMP (hmdCMP) in a two-step process entailing deamination to cytotoxic 5-hydroxymethyl-dUMP (hmdUMP), followed by its hydrolysis into 5-hydroxymethyluracil (hmU) and 2-deoxy-D-ribose 5-phosphate (deoxyribosephosphate). Catalyzes the second step in that pathway, the hydrolysis of the N-glycosidic bond in hmdUMP, degrading this cytotoxic nucleotide to avoid its genomic integration. This chain is 5-hydroxymethyl-dUMP N-hydrolase, found in Branchiostoma floridae (Florida lancelet).